The sequence spans 296 residues: Elongation factor Ts (296 aa).

The involved in Mg(2+) ion dislocation from EF-Tu stretch occupies residues 81 to 84; the sequence is TDFV.

This sequence belongs to the EF-Ts family.

It localises to the cytoplasm. Associates with the EF-Tu.GDP complex and induces the exchange of GDP to GTP. It remains bound to the aminoacyl-tRNA.EF-Tu.GTP complex up to the GTP hydrolysis stage on the ribosome. This chain is Elongation factor Ts, found in Ruthia magnifica subsp. Calyptogena magnifica.